The primary structure comprises 370 residues: Alpha-ketoglutarate-dependent dioxygenase cnsP (370 aa).

Low complexity predominate over residues 1–12; it reads MSTTTVITPGTI. A disordered region spans residues 1–20; the sequence is MSTTTVITPGTITREKNENG. His131 contributes to the substrate binding site. Residues His169 and Asp171 each contribute to the Fe cation site. Thr197 serves as a coordination point for 2-oxoglutarate. His321 provides a ligand contact to Fe cation. Positions 333 and 337 each coordinate 2-oxoglutarate. Arg337 serves as a coordination point for substrate.

The protein belongs to the TfdA dioxygenase family. Fe(2+) is required as a cofactor.

Its pathway is alkaloid biosynthesis. In terms of biological role, alpha-ketoglutarate-dependent dioxygenase; part of the gene cluster that mediates the biosynthesis of communesins, a prominent class of indole alkaloids with great potential as pharmaceuticals. Communesins are biosynthesized by the coupling of tryptamine and aurantioclavine, two building blocks derived from L-tryptophan. The L-tryptophan decarboxylase cnsB converts L-tryptophan to tryptamine, whereas the tryptophan dimethylallyltransferase cnsF converts L-tryptophan to 4-dimethylallyl tryptophan which is further transformed to aurantioclavine by the aurantioclavine synthase cnsA, probably aided by the catalase cnsD. The cytochrome P450 monooxygenase cnsC catalyzes the heterodimeric coupling between the two different indole moieties, tryptamine and aurantioclavine, to construct vicinal quaternary stereocenters and yield the heptacyclic communesin scaffold. The O-methyltransferase cnsE then methylates the communesin scaffold to produce communesin K, the simplest characterized communesin that contains the heptacyclic core. The dioxygenase cnsJ converts communesin K into communesin I. Acylation to introduce the hexadienyl group at position N16 of communesin I by the acyltransferase cnsK leads to the production of communesin B. The hexadienyl group is produced by the highly reducing polyketide synthase cnsI, before being hydrolytically removed from cnsI by the serine hydrolase cnsH, converted into hexadienyl-CoA by the CoA ligase cnsG, and then transferred to communesin I by cnsK. Surprisingly, cnsK may also be a promiscuous acyltransferase that can tolerate a range of acyl groups, including acetyl-, propionyl-, and butyryl-CoA, which lead to communesins A, G and H respectively. The roles of the alpha-ketoglutarate-dependent dioxygenases cnsM and cnsP have still to be determined. The protein is Alpha-ketoglutarate-dependent dioxygenase cnsP of Penicillium expansum (Blue mold rot fungus).